Here is a 132-residue protein sequence, read N- to C-terminus: Small ribosomal subunit protein uS8 (132 aa).

It belongs to the universal ribosomal protein uS8 family. Part of the 30S ribosomal subunit. Contacts proteins S5 and S12.

In terms of biological role, one of the primary rRNA binding proteins, it binds directly to 16S rRNA central domain where it helps coordinate assembly of the platform of the 30S subunit. In Syntrophotalea carbinolica (strain DSM 2380 / NBRC 103641 / GraBd1) (Pelobacter carbinolicus), this protein is Small ribosomal subunit protein uS8.